Consider the following 148-residue polypeptide: Deoxyuridine 5'-triphosphate nucleotidohydrolase (148 aa).

Residues 67-69 (RSG), Asn80, 84-86 (LID), and Met94 contribute to the substrate site.

The protein belongs to the dUTPase family. The cofactor is Mg(2+).

The catalysed reaction is dUTP + H2O = dUMP + diphosphate + H(+). Its pathway is pyrimidine metabolism; dUMP biosynthesis; dUMP from dCTP (dUTP route): step 2/2. Functionally, this enzyme is involved in nucleotide metabolism: it produces dUMP, the immediate precursor of thymidine nucleotides and it decreases the intracellular concentration of dUTP so that uracil cannot be incorporated into DNA. This Francisella tularensis subsp. holarctica (strain FTNF002-00 / FTA) protein is Deoxyuridine 5'-triphosphate nucleotidohydrolase.